The following is a 239-amino-acid chain: Fatty acid metabolism regulator protein (239 aa).

The region spanning 6 to 74 (QSPAGFAEEY…HGKPTKINNF (69 aa)) is the HTH gntR-type domain. The segment at residues 34 to 53 (ERELSELIGVTRTTLREVLQ) is a DNA-binding region (H-T-H motif).

As to quaternary structure, homodimer.

It localises to the cytoplasm. Its function is as follows. Multifunctional regulator of fatty acid metabolism. The protein is Fatty acid metabolism regulator protein of Pectobacterium atrosepticum (strain SCRI 1043 / ATCC BAA-672) (Erwinia carotovora subsp. atroseptica).